The following is a 452-amino-acid chain: PTS system N-acetylglucosamine-specific EIICB component (452 aa).

A PTS EIIC type-1 domain is found at 1–361 (MLSFLQKLGK…LNLKTPGRED (361 aa)). A run of 9 helical transmembrane segments spans residues 8–28 (LGKSFMLPIAVLPAVGIILAL), 42–62 (AGTAVFDHLPLIFAIGIAIGI), 91–111 (TNNMAVFGGIIAGLIAGYTYN), 130–150 (LVPILTAIITIILAGIFGVVW), 163–183 (WMLGLGGIGAGIFGLFNRLLI), 223–243 (MTGFFPIMMFGLPAACLAMVV), 257–277 (MIGFALTAFITGITEPIEFAF), 279–299 (FLSPLLYAVHAVLTGLSLFIV), and 329–349 (LLLLVGICYAAVYFIVFYVLI). A PTS EIIB type-1 domain is found at 375–452 (DVNENIMLKG…AAEELRAAVK (78 aa)). Cys397 functions as the Phosphocysteine intermediate; for EIIB activity in the catalytic mechanism.

In terms of assembly, interacts with FloT.

It is found in the cell membrane. The protein localises to the membrane raft. It catalyses the reaction N(pros)-phospho-L-histidyl-[protein] + N-acetyl-D-glucosamine(out) = N-acetyl-D-glucosamine 6-phosphate(in) + L-histidyl-[protein]. In terms of biological role, the phosphoenolpyruvate-dependent sugar phosphotransferase system (sugar PTS), a major carbohydrate active -transport system, catalyzes the phosphorylation of incoming sugar substrates concomitantly with their translocation across the cell membrane. This system is involved in N-acetylglucosamine transport. The polypeptide is PTS system N-acetylglucosamine-specific EIICB component (nagP) (Bacillus subtilis (strain 168)).